A 134-amino-acid chain; its full sequence is Fluoride-specific ion channel FluC (134 aa).

The next 4 helical transmembrane spans lie at 7–27 (LAVAIGGSLGAMSRYLVTIMA), 38–58 (GTLLVNTLGSFLAGFFLIVLV), 69–89 (LFLFTGFLGAFTTFSSFAAES), and 110–130 (VGSLSMVFVGTLVAKYVLLGH). Residues Gly-77 and Thr-80 each coordinate Na(+).

It belongs to the fluoride channel Fluc/FEX (TC 1.A.43) family.

It localises to the cell inner membrane. The enzyme catalyses fluoride(in) = fluoride(out). Na(+) is not transported, but it plays an essential structural role and its presence is essential for fluoride channel function. In terms of biological role, fluoride-specific ion channel. Important for reducing fluoride concentration in the cell, thus reducing its toxicity. The protein is Fluoride-specific ion channel FluC of Legionella pneumophila (strain Lens).